A 920-amino-acid chain; its full sequence is Puromycin-sensitive aminopeptidase (920 aa).

Residues Glu-181 and Gly-317–Asn-321 each bind substrate. His-353 contacts Zn(2+). The Proton acceptor role is filled by Glu-354. Zn(2+) contacts are provided by His-357 and Glu-376. Residue Tyr-465 is modified to 3'-nitrotyrosine. A Nuclear localization signal motif is present at residues Arg-727–Lys-731.

This sequence belongs to the peptidase M1 family. Monomer. Zn(2+) serves as cofactor. As to expression, widely expressed. Highest expression in brain, particularly the striatum and hippocampus. Expressed in Sertoli cells.

It is found in the cytoplasm. It localises to the cytosol. The protein resides in the nucleus. It catalyses the reaction Release of an N-terminal amino acid, preferentially alanine, from a wide range of peptides, amides and arylamides.. With respect to regulation, strongly inhibited by bestatin, leuhistin, actinonin, amastatin, 1,10-phenanthroline, DFP, PCMBS, Zn(2+), Cd(2+), Co(2+), Cu(2+), Hg(2+), EDTA and puromycin. Not inhibited by PMSF, and only slightly inhibited by leupeptin and aprotinin. Activity is increased by Mg(2+) and Ca(2+). Its function is as follows. Aminopeptidase with broad substrate specificity for several peptides. Involved in proteolytic events essential for cell growth and viability. May act as regulator of neuropeptide activity. Plays a role in the antigen-processing pathway for MHC class I molecules. Involved in the N-terminal trimming of cytotoxic T-cell epitope precursors. Digests the poly-Q peptides found in many cellular proteins. The sequence is that of Puromycin-sensitive aminopeptidase (Npepps) from Mus musculus (Mouse).